The following is a 302-amino-acid chain: Probable lipid kinase YegS-like (302 aa).

Residues 1–129 (MDKDKVLLVL…IDLGAVNGKL (129 aa)) form the DAGKc domain. Residues T39, 65 to 71 (GDGTLRE), and T92 each bind ATP. Positions 210, 213, and 215 each coordinate Mg(2+). E268 (proton acceptor) is an active-site residue.

This sequence belongs to the diacylglycerol/lipid kinase family. YegS lipid kinase subfamily. It depends on Mg(2+) as a cofactor. Ca(2+) serves as cofactor.

It is found in the cytoplasm. Its function is as follows. Probably phosphorylates lipids; the in vivo substrate is unknown. The protein is Probable lipid kinase YegS-like of Pseudomonas aeruginosa (strain UCBPP-PA14).